The sequence spans 800 residues: Ent-copalyl diphosphate synthase 2, chloroplastic (800 aa).

The N-terminal 47 residues, 1 to 47 (MQMQVLTAASSLPRATLLRPAAAEPWRQSFLQLQARPIQRPGIMLHC), are a transit peptide targeting the chloroplast. Residues 52-80 (QGQETRERRQLDDDEHARPPQGGDDDVAA) are disordered. The segment covering 55–69 (ETRERRQLDDDEHAR) has biased composition (basic and acidic residues). Residue lysine 242 participates in substrate binding. Residues aspartate 374 and aspartate 376 each coordinate Mg(2+). The DXDD motif signature appears at 374 to 377 (DIDD). Residue lysine 461 coordinates substrate.

The protein belongs to the terpene synthase family. Mg(2+) serves as cofactor.

It is found in the plastid. It localises to the chloroplast. The enzyme catalyses (2E,6E,10E)-geranylgeranyl diphosphate = ent-copalyl diphosphate. It functions in the pathway secondary metabolite biosynthesis; terpenoid biosynthesis. Catalyzes the conversion of geranylgeranyl diphosphate to the phytoalexin precursor ent-copalyl diphosphate. The chain is Ent-copalyl diphosphate synthase 2, chloroplastic from Oryza sativa subsp. japonica (Rice).